Consider the following 264-residue polypeptide: DNA repair protein RecO (264 aa).

This sequence belongs to the RecO family.

Its function is as follows. Involved in DNA repair and RecF pathway recombination. This is DNA repair protein RecO from Chlorobium luteolum (strain DSM 273 / BCRC 81028 / 2530) (Pelodictyon luteolum).